The primary structure comprises 523 residues: Putative L-type lectin-domain containing receptor kinase V.6 (523 aa).

The first 27 residues, 1 to 27 (MFSEVKVLQIVLVQWLTLFSFTYNSHG), serve as a signal peptide directing secretion. A legume-lectin like region spans residues 28–242 (TYILDGSAVF…TGSIRALHYM (215 aa)). Topologically, residues 28-279 (TYILDGSAVF…KPSDRLRTVL (252 aa)) are extracellular. Residues N47, N59, N112, and N171 are each glycosylated (N-linked (GlcNAc...) asparagine). The chain crosses the membrane as a helical span at residues 280-300 (AVCLTLALFAVFLASGIGFVF). Residues 301 to 523 (YLRHKKVKEV…TGRAVRVKFF (223 aa)) lie on the Cytoplasmic side of the membrane. The region spanning 335–523 (FKEKQLLGKG…TGRAVRVKFF (189 aa)) is the Protein kinase domain. ATP-binding positions include 341–349 (LGKGGFGQV) and K364. D464 serves as the catalytic Proton acceptor.

It in the C-terminal section; belongs to the protein kinase superfamily. Ser/Thr protein kinase family. In the N-terminal section; belongs to the leguminous lectin family.

It is found in the cell membrane. The catalysed reaction is L-seryl-[protein] + ATP = O-phospho-L-seryl-[protein] + ADP + H(+). The enzyme catalyses L-threonyl-[protein] + ATP = O-phospho-L-threonyl-[protein] + ADP + H(+). This Arabidopsis thaliana (Mouse-ear cress) protein is Putative L-type lectin-domain containing receptor kinase V.6 (LECRK56).